The sequence spans 1127 residues: Disease resistance protein RPS6 (1127 aa).

Met-1 carries the N-acetylmethionine modification. A TIR domain is found at 12–176 (WSYHVFPSFS…EIANDILGKM (165 aa)). Glu-87 is a catalytic residue. LRR repeat units lie at residues 197–221 (MSSLLHLESEEVRMVGIWGPSGIGK), 540–563 (IDETDELHIHESSFKGMHNLLFLK), 587–609 (PSRLRLLRFDRYPSKCLPSNFHP), 610–632 (ENLVKLQMQQSKLEKLWDGVHSL), 633–656 (AGLRNMDLRGSRNLKEIPDLSMAT), 658–679 (LETLKLSSCSSLVELPSSIQYL), 680–704 (NKLNDLDMSYCDHLETIPSGVNLKS), 766–790 (SPTLTRLTFSNNPSFVEVPSSIQNL), 791–813 (YQLEHLEIMNCRNLVTLPTGINL), 814–834 (DSLISLDLSHCSQLKTFPDIS), and 835–857 (TNISDLNLSYTAIEEVPLSIEKL).

As to quaternary structure, interacts with EDS1. In terms of tissue distribution, ubiquitous.

It carries out the reaction NAD(+) + H2O = ADP-D-ribose + nicotinamide + H(+). Its function is as follows. Disease resistance (R) protein that specifically recognizes the hopA1 type III effector avirulence protein from Pseudomonas syringae. Resistance proteins guard the plant against pathogens that contain an appropriate avirulence protein via an indirect interaction with this avirulence protein. That triggers a defense system including the hypersensitive response, which restricts the pathogen growth. This is Disease resistance protein RPS6 from Arabidopsis thaliana (Mouse-ear cress).